A 441-amino-acid polypeptide reads, in one-letter code: ATP-dependent RNA helicase sub2 (441 aa).

Residues Asp19–Ala29 show a composition bias toward low complexity. Residues Asp19–Gly43 form a disordered region. The Q motif motif lies at Thr58–Gln86. One can recognise a Helicase ATP-binding domain in the interval Ile89–Val264. Ala102–Thr109 lines the ATP pocket. Residues Asp211–Asp214 carry the DEAD box motif. The 162-residue stretch at Gly276 to Ser437 folds into the Helicase C-terminal domain.

Belongs to the DEAD box helicase family. DECD subfamily.

The protein localises to the nucleus. It catalyses the reaction ATP + H2O = ADP + phosphate + H(+). Functionally, ATP-binding RNA helicase involved in transcription elongation and required for the export of mRNA out of the nucleus. SUB2 also plays a role in pre-mRNA splicing and spliceosome assembly. May be involved in rDNA and telomeric silencing, and maintenance of genome integrity. This Neosartorya fischeri (strain ATCC 1020 / DSM 3700 / CBS 544.65 / FGSC A1164 / JCM 1740 / NRRL 181 / WB 181) (Aspergillus fischerianus) protein is ATP-dependent RNA helicase sub2 (sub2).